A 130-amino-acid chain; its full sequence is Putative ankyrin repeat protein R886 (130 aa).

ANK repeat units follow at residues 21–50 (NYDR…DITA), 54–83 (YGFT…SIIK), and 85–113 (DNLT…DIRY).

The polypeptide is Putative ankyrin repeat protein R886 (Acanthamoeba polyphaga (Amoeba)).